The primary structure comprises 130 residues: Small ribosomal subunit protein uS11c (130 aa).

It belongs to the universal ribosomal protein uS11 family. Part of the 30S ribosomal subunit.

It localises to the plastid. The protein resides in the chloroplast. This chain is Small ribosomal subunit protein uS11c, found in Marsilea quadrifolia (European water clover).